A 635-amino-acid polypeptide reads, in one-letter code: Beta-mannosyltransferase 2 (635 aa).

Residues 1 to 6 (MRTRLN) lie on the Cytoplasmic side of the membrane. Residues 7-27 (FLLLCIASVLSVIWIGVLLTW) traverse the membrane as a helical segment. Residues 28–635 (NDNNLGGISL…EKKEAEKKGK (608 aa)) are Extracellular-facing. Residue Asn-484 is glycosylated (N-linked (GlcNAc...) asparagine). The stretch at 512-635 (TRGEAERRRR…EKKEAEKKGK (124 aa)) forms a coiled coil. Residues 517–635 (ERRRRVAEER…EKKEAEKKGK (119 aa)) form a disordered region.

This sequence belongs to the BMT family.

The protein localises to the membrane. Functionally, beta-mannosyltransferase involved in cell wall biosynthesis. Initiates the beta-mannosylation of core N-linked glycans. The protein is Beta-mannosyltransferase 2 (BMT2) of Komagataella phaffii (strain ATCC 76273 / CBS 7435 / CECT 11047 / NRRL Y-11430 / Wegner 21-1) (Yeast).